The sequence spans 373 residues: Probable jasmonic acid carboxyl methyltransferase 1 (373 aa).

Tyrosine 18 provides a ligand contact to S-adenosyl-L-homocysteine. Glutamine 25 lines the jasmonate pocket. Positions 59, 64, 96, 97, 135, and 136 each coordinate S-adenosyl-L-homocysteine. Jasmonate contacts are provided by histidine 156 and tryptophan 157. Positions 174, 260, 262, and 263 each coordinate Mg(2+).

The protein belongs to the methyltransferase superfamily. Type-7 methyltransferase family. Mg(2+) is required as a cofactor.

The protein localises to the cytoplasm. The protein resides in the nucleus. It catalyses the reaction jasmonate + S-adenosyl-L-methionine = methyl (-)-jasmonate + S-adenosyl-L-homocysteine. It functions in the pathway lipid metabolism; oxylipin biosynthesis. Its function is as follows. Catalyzes the methylation of jasmonate into methyljasmonate, a plant volatile that acts as an important cellular regulator mediating diverse developmental processes and defense responses. The polypeptide is Probable jasmonic acid carboxyl methyltransferase 1 (Theobroma cacao (Cacao)).